The sequence spans 840 residues: Protein translocase subunit SecA (840 aa).

Residues Gln-85, 103 to 107 (GEGKT), and Asp-492 contribute to the ATP site. Residues 787–822 (QRERVAKETGASHGGDSQEVKKKPVKKEPKVGRNDL) are disordered. Over residues 802–819 (DSQEVKKKPVKKEPKVGR) the composition is skewed to basic and acidic residues. Zn(2+)-binding residues include Cys-823, Cys-825, Cys-834, and Cys-835.

It belongs to the SecA family. In terms of assembly, monomer and homodimer. Part of the essential Sec protein translocation apparatus which comprises SecA, SecYEG and auxiliary proteins SecDF. Other proteins may also be involved. Zn(2+) is required as a cofactor.

The protein resides in the cell membrane. Its subcellular location is the cytoplasm. It catalyses the reaction ATP + H2O + cellular proteinSide 1 = ADP + phosphate + cellular proteinSide 2.. Its function is as follows. Part of the Sec protein translocase complex. Interacts with the SecYEG preprotein conducting channel. Has a central role in coupling the hydrolysis of ATP to the transfer of proteins into and across the cell membrane, serving as an ATP-driven molecular motor driving the stepwise translocation of polypeptide chains across the membrane. The chain is Protein translocase subunit SecA from Clostridium perfringens (strain ATCC 13124 / DSM 756 / JCM 1290 / NCIMB 6125 / NCTC 8237 / Type A).